The chain runs to 838 residues: Protein kintoun (838 aa).

Disordered stretches follow at residues 106–125 (RPKN…LNWS), 212–238 (NPTA…GKPE), 370–411 (LRHF…TSSP), 557–696 (NAPL…DSCS), and 776–838 (QQRR…EMDD). Residues 114-125 (DPSSGSRGLNWS) are compositionally biased toward polar residues. The span at 370 to 380 (LRHFSREDSGV) shows a compositional bias: basic and acidic residues. S378 is modified (phosphoserine). Positions 389–398 (PVEEDPDGEL) are enriched in acidic residues. Residues 557 to 572 (NAPLDVEFERNQEGHA) are compositionally biased toward basic and acidic residues. Residues 583-592 (EEEEEEEDKE) show a composition bias toward acidic residues. The segment covering 601–611 (DQQQQQQVQNK) has biased composition (low complexity). Composition is skewed to basic residues over residues 612–623 (KSGKKQRKRNKK) and 673–683 (RSHRGILKRFS). S781 is subject to Phosphoserine. A compositionally biased stretch (basic and acidic residues) spans 789 to 802 (EETRGSALKQKENP).

The protein belongs to the PIH1 family. Kintoun subfamily. As to quaternary structure, interacts with Pp1alpha-96A, Pp1-87B, Pp1-13C and flw.

The protein localises to the cytoplasm. Functionally, required for cytoplasmic pre-assembly of axonemal dyneins, thereby playing a central role in motility in cilia and flagella. Involved in pre-assembly of dynein arm complexes in the cytoplasm before intraflagellar transport loads them for the ciliary compartment. The polypeptide is Protein kintoun (Drosophila sechellia (Fruit fly)).